The primary structure comprises 61 residues: Metallothionein-1 (61 aa).

At M1 the chain carries N-acetylmethionine. Residues 1–29 (MDPNCSCATGVSCTCADSCKCKECKCTSC) are beta. Residues C5, C7, C13, C15, C19, C21, C24, C26, C29, C33, C34, C36, C37, C41, C44, C48, C50, C57, C59, and C60 each contribute to the a divalent metal cation site. Residues 30–61 (KKSCCSCCPVGCAKCAQGCVCKGASEKCNCCA) form an alpha region.

The protein belongs to the metallothionein superfamily. Type 1 family.

Its function is as follows. Metallothioneins have a high content of cysteine residues that bind various heavy metals; these proteins are transcriptionally regulated by both heavy metals and glucocorticoids. This is Metallothionein-1 (MT1) from Chlorocebus aethiops (Green monkey).